We begin with the raw amino-acid sequence, 334 residues long: Beta-ketoacyl-[acyl-carrier-protein] synthase III (334 aa).

Active-site residues include Cys-114 and His-260. An ACP-binding region spans residues 261–265 (QANLR). Asn-290 is a catalytic residue.

The protein belongs to the thiolase-like superfamily. FabH family. As to quaternary structure, homodimer.

It is found in the cytoplasm. It catalyses the reaction malonyl-[ACP] + acetyl-CoA + H(+) = 3-oxobutanoyl-[ACP] + CO2 + CoA. The protein operates within lipid metabolism; fatty acid biosynthesis. In terms of biological role, catalyzes the condensation reaction of fatty acid synthesis by the addition to an acyl acceptor of two carbons from malonyl-ACP. Catalyzes the first condensation reaction which initiates fatty acid synthesis and may therefore play a role in governing the total rate of fatty acid production. Possesses both acetoacetyl-ACP synthase and acetyl transacylase activities. Its substrate specificity determines the biosynthesis of branched-chain and/or straight-chain of fatty acids. This is Beta-ketoacyl-[acyl-carrier-protein] synthase III from Clostridium tetani (strain Massachusetts / E88).